We begin with the raw amino-acid sequence, 485 residues long: Cysteine--tRNA ligase (485 aa).

Cys28 provides a ligand contact to Zn(2+). Residues 30–40 (MTVYDLCHVGH) carry the 'HIGH' region motif. Residues Cys209, His234, and Glu238 each contribute to the Zn(2+) site. Positions 266–270 (KMSKS) match the 'KMSKS' region motif. Lys269 is a binding site for ATP.

It belongs to the class-I aminoacyl-tRNA synthetase family. In terms of assembly, monomer. Zn(2+) serves as cofactor.

Its subcellular location is the cytoplasm. It catalyses the reaction tRNA(Cys) + L-cysteine + ATP = L-cysteinyl-tRNA(Cys) + AMP + diphosphate. This chain is Cysteine--tRNA ligase, found in Nitrosococcus oceani (strain ATCC 19707 / BCRC 17464 / JCM 30415 / NCIMB 11848 / C-107).